The sequence spans 283 residues: ATP synthase gamma chain (283 aa).

This sequence belongs to the ATPase gamma chain family. F-type ATPases have 2 components, CF(1) - the catalytic core - and CF(0) - the membrane proton channel. CF(1) has five subunits: alpha(3), beta(3), gamma(1), delta(1), epsilon(1). CF(0) has three main subunits: a, b and c.

It localises to the cell membrane. Functionally, produces ATP from ADP in the presence of a proton gradient across the membrane. The gamma chain is believed to be important in regulating ATPase activity and the flow of protons through the CF(0) complex. This Clostridium kluyveri (strain NBRC 12016) protein is ATP synthase gamma chain.